The following is a 73-amino-acid chain: Translation initiation factor IF-1 (73 aa).

Residues Met-1–Arg-73 form the S1-like domain.

This sequence belongs to the IF-1 family. In terms of assembly, component of the 30S ribosomal translation pre-initiation complex which assembles on the 30S ribosome in the order IF-2 and IF-3, IF-1 and N-formylmethionyl-tRNA(fMet); mRNA recruitment can occur at any time during PIC assembly.

The protein localises to the cytoplasm. In terms of biological role, one of the essential components for the initiation of protein synthesis. Stabilizes the binding of IF-2 and IF-3 on the 30S subunit to which N-formylmethionyl-tRNA(fMet) subsequently binds. Helps modulate mRNA selection, yielding the 30S pre-initiation complex (PIC). Upon addition of the 50S ribosomal subunit IF-1, IF-2 and IF-3 are released leaving the mature 70S translation initiation complex. The protein is Translation initiation factor IF-1 of Acinetobacter baylyi (strain ATCC 33305 / BD413 / ADP1).